The sequence spans 642 residues: MPVITLPDGSQRVFANPVSTMDVAADIGPGLAKACIAGRVNGELKDACDLIHEDASLSIITARDEEGLEILRHSCAHLLGHAIKQLWPQTKMAIGPVIDNGFYYDVDLEHKLTADDIAALEKRMLELAKTDYDVVKRVVSWQEARDTFEGRGESYKMAILDENIAKDATPALYHHEEYTDMCRGPHVPNMRFCHHFKLMSVAGAYWRGDSNNKMLQRIYGTAWGDKKALNTHLARLEEAAKRDHRKIGKQLDLYHMQEEAPGMVFWHNDGWSIFRELETFIRHKLSEYDYQEVKGPFMMDRVLWERSGHWDKYADAMFTTASENREYAIKPMNCPGHVQIFNQGLKSYRDLPLRMAEFGCCHRNEPSGSLHGLMRVRGFTQDDAHIFCTEEQVQEEVSACIRMVYDTYSTFGFENIVVKLSTRPEKRIGDDDMWDRAESALIEALNANGIAFEILPGEGAFYGPKIEFTLHDCLDRAWQCGTVQLDYALPGRLGATYVAEDNARQTPVMIHRAILGSLERFIGILIEEYAGRFPAWLAPVQAVVMNITDKQADYVEELVKFFKEQGIRASQDLRNEKIGFKIREHTLRRVPYLLVVGDQEMENREIAVRTRDGKDLGKMSIDAFVASVKEQISHRSLKLLEE.

The TGS domain maps to 1-61 (MPVITLPDGS…HEDASLSIIT (61 aa)). The interval 243 to 534 (DHRKIGKQLD…LIEEYAGRFP (292 aa)) is catalytic. Cys334, His385, and His511 together coordinate Zn(2+).

It belongs to the class-II aminoacyl-tRNA synthetase family. In terms of assembly, homodimer. Requires Zn(2+) as cofactor.

The protein localises to the cytoplasm. The enzyme catalyses tRNA(Thr) + L-threonine + ATP = L-threonyl-tRNA(Thr) + AMP + diphosphate + H(+). Catalyzes the attachment of threonine to tRNA(Thr) in a two-step reaction: L-threonine is first activated by ATP to form Thr-AMP and then transferred to the acceptor end of tRNA(Thr). Also edits incorrectly charged L-seryl-tRNA(Thr). In Shewanella amazonensis (strain ATCC BAA-1098 / SB2B), this protein is Threonine--tRNA ligase.